The chain runs to 252 residues: Probable endonuclease 4 (252 aa).

Zn(2+) is bound by residues histidine 56, histidine 96, glutamate 129, aspartate 162, histidine 165, histidine 191, aspartate 204, histidine 206, and glutamate 233.

Belongs to the AP endonuclease 2 family. The cofactor is Zn(2+).

The enzyme catalyses Endonucleolytic cleavage to 5'-phosphooligonucleotide end-products.. Endonuclease IV plays a role in DNA repair. It cleaves phosphodiester bonds at apurinic or apyrimidinic (AP) sites, generating a 3'-hydroxyl group and a 5'-terminal sugar phosphate. In Mycobacterium tuberculosis (strain ATCC 25177 / H37Ra), this protein is Probable endonuclease 4.